The following is a 310-amino-acid chain: Probable cell division protein WhiA (310 aa).

A DNA-binding region (H-T-H motif) is located at residues 277–310; it reads SLKELAEQVPDGPISKSGVNHRLKKLHEIAENLR.

The protein belongs to the WhiA family.

Its function is as follows. Involved in cell division and chromosome segregation. The chain is Probable cell division protein WhiA from Lactobacillus delbrueckii subsp. bulgaricus (strain ATCC 11842 / DSM 20081 / BCRC 10696 / JCM 1002 / NBRC 13953 / NCIMB 11778 / NCTC 12712 / WDCM 00102 / Lb 14).